A 273-amino-acid chain; its full sequence is Homeobox protein ceh-43 (273 aa).

2 disordered regions span residues 47-79 (NGATGGSMYGTPQQTSAYAMYPPGPGSSPEEAF) and 153-204 (RRSK…LVSS). Residues 102-161 (MRKPRTIYNSSQLQMLQKKFQKTQYLALPDRAALAHELGLSQTQVKIWFQNRRSKQKKQK) constitute a DNA-binding region (homeobox).

The protein belongs to the distal-less homeobox family. In terms of tissue distribution, predominantly expressed in the head hypdodermis, neuronal support cells and CAN neurons.

The protein localises to the nucleus. In terms of biological role, probable transcription factor. Binds to the sequence motif 5'-ATAAT-3' in regulatory elements. Required for development of the anterior hypodermis during embryonic morphogenesis for cell adhesion; also affects embryonic and larval viability. Modulates and maintains dopaminergic neuron differentiation. May activate dopamine pathway genes in concert with ETS domain-containing protein ast-1, and homeobox proteins ceh-40 and ceh-20. The chain is Homeobox protein ceh-43 (ceh-43) from Caenorhabditis elegans.